Reading from the N-terminus, the 335-residue chain is Ketol-acid reductoisomerase (NADP(+)) 2 (335 aa).

In terms of domain architecture, KARI N-terminal Rossmann spans 1-180 (MKTYYEKDAN…GCTRAGVIET (180 aa)). NADP(+)-binding positions include 24–27 (YGSQ), Arg-47, Ser-51, and 81–84 (DEQQ). His-106 is a catalytic residue. Gly-132 is a binding site for NADP(+). Residues 181–326 (TFQEETETDL…AELREMMSWI (146 aa)) form the KARI C-terminal knotted domain. Residues Asp-189, Glu-193, Glu-225, and Glu-229 each contribute to the Mg(2+) site. Ser-250 serves as a coordination point for substrate.

It belongs to the ketol-acid reductoisomerase family. The cofactor is Mg(2+).

The catalysed reaction is (2R)-2,3-dihydroxy-3-methylbutanoate + NADP(+) = (2S)-2-acetolactate + NADPH + H(+). It catalyses the reaction (2R,3R)-2,3-dihydroxy-3-methylpentanoate + NADP(+) = (S)-2-ethyl-2-hydroxy-3-oxobutanoate + NADPH + H(+). The protein operates within amino-acid biosynthesis; L-isoleucine biosynthesis; L-isoleucine from 2-oxobutanoate: step 2/4. It participates in amino-acid biosynthesis; L-valine biosynthesis; L-valine from pyruvate: step 2/4. Its function is as follows. Involved in the biosynthesis of branched-chain amino acids (BCAA). Catalyzes an alkyl-migration followed by a ketol-acid reduction of (S)-2-acetolactate (S2AL) to yield (R)-2,3-dihydroxy-isovalerate. In the isomerase reaction, S2AL is rearranged via a Mg-dependent methyl migration to produce 3-hydroxy-3-methyl-2-ketobutyrate (HMKB). In the reductase reaction, this 2-ketoacid undergoes a metal-dependent reduction by NADPH to yield (R)-2,3-dihydroxy-isovalerate. The chain is Ketol-acid reductoisomerase (NADP(+)) 2 from Bacillus cereus (strain ATCC 10987 / NRS 248).